The following is a 433-amino-acid chain: tRNA modification GTPase MnmE (433 aa).

The (6S)-5-formyl-5,6,7,8-tetrahydrofolate site is built by arginine 24, glutamate 86, and lysine 125. In terms of domain architecture, TrmE-type G spans 218-363 (GARLALIGAP…LKEALREALL (146 aa)). Asparagine 228 is a K(+) binding site. GTP is bound by residues 228–233 (NAGKSS), 247–253 (SPIPGTT), and 272–275 (DTAG). Position 232 (serine 232) interacts with Mg(2+). Residues serine 247, isoleucine 249, and threonine 252 each coordinate K(+). Threonine 253 is a Mg(2+) binding site. Lysine 433 serves as a coordination point for (6S)-5-formyl-5,6,7,8-tetrahydrofolate.

The protein belongs to the TRAFAC class TrmE-Era-EngA-EngB-Septin-like GTPase superfamily. TrmE GTPase family. In terms of assembly, homodimer. Heterotetramer of two MnmE and two MnmG subunits. K(+) is required as a cofactor.

It is found in the cytoplasm. Exhibits a very high intrinsic GTPase hydrolysis rate. Involved in the addition of a carboxymethylaminomethyl (cmnm) group at the wobble position (U34) of certain tRNAs, forming tRNA-cmnm(5)s(2)U34. The protein is tRNA modification GTPase MnmE of Thermus thermophilus (strain ATCC BAA-163 / DSM 7039 / HB27).